A 149-amino-acid polypeptide reads, in one-letter code: 3-dehydroquinate dehydratase (149 aa).

Tyr25 (proton acceptor) is an active-site residue. Asn76, His82, and Asp89 together coordinate substrate. His102 serves as the catalytic Proton donor. Substrate contacts are provided by residues 103–104 (LS) and Arg113.

Belongs to the type-II 3-dehydroquinase family. As to quaternary structure, homododecamer.

The catalysed reaction is 3-dehydroquinate = 3-dehydroshikimate + H2O. Its pathway is metabolic intermediate biosynthesis; chorismate biosynthesis; chorismate from D-erythrose 4-phosphate and phosphoenolpyruvate: step 3/7. Functionally, catalyzes a trans-dehydration via an enolate intermediate. The chain is 3-dehydroquinate dehydratase from Acaryochloris marina (strain MBIC 11017).